The following is a 917-amino-acid chain: von Willebrand factor A domain-containing protein DDB_G0285975 (917 aa).

A disordered region spans residues 12–51; sequence DTTTTTTPTTPTTPTTPTTTPTTTTTPTTTPTTTTTSTTP. The segment covering 13-51 has biased composition (low complexity); the sequence is TTTTTTPTTPTTPTTPTTTPTTTTTPTTTPTTTTTSTTP. Residues 87–215 enclose the VIT domain; sequence RYNTGLKNIS…NVTIHLTIIS (129 aa). In terms of domain architecture, VWFA spans 339–507; it reads EFIFLIDCSG…NFEEQVMKLV (169 aa). A t-SNARE coiled-coil homology domain is found at 679–741; that stretch reads LFSSENRNQT…INSIPQKSNI (63 aa). Composition is skewed to low complexity over residues 751–760 and 774–818; these read SPSEVSTSKS and NNNN…NNNN. The tract at residues 751–822 is disordered; the sequence is SPSEVSTSKS…NNNNNNSDNS (72 aa).

This chain is von Willebrand factor A domain-containing protein DDB_G0285975, found in Dictyostelium discoideum (Social amoeba).